Reading from the N-terminus, the 237-residue chain is Putative N-acetylmannosamine-6-phosphate 2-epimerase (237 aa).

It belongs to the NanE family.

The catalysed reaction is an N-acyl-D-glucosamine 6-phosphate = an N-acyl-D-mannosamine 6-phosphate. It participates in amino-sugar metabolism; N-acetylneuraminate degradation; D-fructose 6-phosphate from N-acetylneuraminate: step 3/5. In terms of biological role, converts N-acetylmannosamine-6-phosphate (ManNAc-6-P) to N-acetylglucosamine-6-phosphate (GlcNAc-6-P). The protein is Putative N-acetylmannosamine-6-phosphate 2-epimerase of Caldanaerobacter subterraneus subsp. tengcongensis (strain DSM 15242 / JCM 11007 / NBRC 100824 / MB4) (Thermoanaerobacter tengcongensis).